The following is a 557-amino-acid chain: Organic cation/carnitine transporter 2 (557 aa).

The Cytoplasmic portion of the chain corresponds to 1–20; that stretch reads MRDYDEVTAFLGEWGPFQRL. Residues 21 to 41 form a helical membrane-spanning segment; it reads IFFLLSASIIPNGFNGMSIVF. The Extracellular segment spans residues 42–142; it reads LAGTPEHRCL…DLVCKDDWKA (101 aa). Asn-57, Asn-64, and Asn-91 each carry an N-linked (GlcNAc...) asparagine glycan. The helical transmembrane segment at 143-163 threads the bilayer; it reads PLTTSLFFVGVLMGSFISGQL. Topologically, residues 164-172 are cytoplasmic; that stretch reads SDRFGRKNV. The chain crosses the membrane as a helical span at residues 173–193; sequence LFLTMGMQTGFSFLQVFSVNF. The Extracellular portion of the chain corresponds to 194–197; it reads EMFT. A helical transmembrane segment spans residues 198-218; the sequence is VLFVLVGMGQISNYVAAFVLG. ATP is bound at residue 218-225; it reads GTEILSKS. The Cytoplasmic portion of the chain corresponds to 219–232; that stretch reads TEILSKSIRIIFAT. The helical transmembrane segment at 233 to 253 threads the bilayer; the sequence is LGVCIFYAFGFMVLPLFAYFI. At 254–257 the chain is on the extracellular side; it reads RDWR. Residues 258–278 traverse the membrane as a helical segment; the sequence is MLLLALTVPGVLCGALWWFIP. Residues 279-341 lie on the Cytoplasmic side of the membrane; the sequence is ESPRWLISQG…YDLIRTRNIR (63 aa). Residues 342–362 form a helical membrane-spanning segment; sequence VITIMSIILWLTISVGYFGLS. The Extracellular portion of the chain corresponds to 363 to 373; that stretch reads LDTPNLHGDIY. The chain crosses the membrane as a helical span at residues 374-394; the sequence is VNCFLLAAVEVPAYVLAWLLL. Over 395–406 the chain is Cytoplasmic; the sequence is QYLPRRYSISAA. The helical transmembrane segment at 407–427 threads the bilayer; it reads LFLGGSVLLFMQLVPSELFYL. Residues 428-430 are Extracellular-facing; the sequence is STA. Residues 431 to 451 traverse the membrane as a helical segment; sequence LVMVGKFGITSAYSMVYVYTA. Over 452–462 the chain is Cytoplasmic; sequence ELYPTVVRNMG. A helical membrane pass occupies residues 463–483; it reads VGVSSTASRLGSILSPYFVYL. The Extracellular portion of the chain corresponds to 484–488; sequence GAYDR. The residue at position 486 (Tyr-486) is a Phosphotyrosine. The helical transmembrane segment at 489-509 threads the bilayer; sequence FLPYILMGSLTILTAILTLFF. The Cytoplasmic segment spans residues 510-557; that stretch reads PESFGVPLPDTIDQMLRVKGIKQWQIQSQTRMQKDGEESPTVLKSTAF. Phosphoserine is present on Ser-548. Phosphothreonine is present on Thr-550.

This sequence belongs to the major facilitator (TC 2.A.1) superfamily. Organic cation transporter (TC 2.A.1.19) family. Interacts with PDZK1. In terms of tissue distribution, widely expressed. Expressed in kidney, liver and testis. Expressed at the brush border of the small, large intestine and colon (at protein level).

It localises to the apical cell membrane. It is found in the basal cell membrane. The protein localises to the cell membrane. The catalysed reaction is (R)-carnitine(out) + Na(+)(out) = (R)-carnitine(in) + Na(+)(in). It catalyses the reaction glycine betaine(out) + Na(+)(out) = glycine betaine(in) + Na(+)(in). It carries out the reaction glycine betaine(out) + (R)-carnitine(in) = glycine betaine(in) + (R)-carnitine(out). The enzyme catalyses O-butanoyl-(R)-carnitine(out) + Na(+)(out) = O-butanoyl-(R)-carnitine(in) + Na(+)(in). The catalysed reaction is O-acetyl-(R)-carnitine(out) + Na(+)(out) = O-acetyl-(R)-carnitine(in) + Na(+)(in). It catalyses the reaction O-propanoyl-(R)-carnitine(out) + Na(+)(out) = O-propanoyl-(R)-carnitine(in) + Na(+)(in). It carries out the reaction (S)-carnitine(out) + Na(+)(out) = (S)-carnitine(in) + Na(+)(in). The enzyme catalyses an O-acyl-(R)-carnitine(out) + Na(+)(out) = an O-acyl-(R)-carnitine(in) + Na(+)(in). The catalysed reaction is L-glutamyl-L-arginyl-glycyl-L-methionyl-L-threonine(out) + Na(+)(out) = L-glutamyl-L-arginyl-glycyl-L-methionyl-L-threonine(in) + Na(+)(in). It catalyses the reaction N,N-dimethylglycine(out) + Na(+)(out) = N,N-dimethylglycine(in) + Na(+)(in). Its activity is regulated as follows. Inhibited by emetine, quinidine and verapamil. The IC(50) of emetine is 4.2 uM. Not inhibited by valproic acid. Transport of (R)-carnitine is stimulated by cholesterol in the plasma membrane. Functionally, sodium-ion dependent, high affinity carnitine transporter. Involved in the active cellular uptake of carnitine. Transports one sodium ion with one molecule of carnitine. Also transports organic cations such as tetraethylammonium (TEA) without the involvement of sodium. Also relative uptake activity ratio of carnitine to TEA is 11.3. May also contribute to regulate the transport of organic compounds in testis across the blood-testis-barrier. This Mus musculus (Mouse) protein is Organic cation/carnitine transporter 2.